We begin with the raw amino-acid sequence, 1353 residues long: Protein prickle (1353 aa).

Disordered stretches follow at residues 130–206 (VDDG…TKRN), 266–292 (QEEE…PPLP), and 500–540 (AKYS…SAHA). Low complexity predominate over residues 147-165 (TPTATATAGRPLFPLSSSP). The span at 166–178 (RRSKKLLRSLRAH) shows a compositional bias: basic residues. Basic and acidic residues predominate over residues 179-189 (VKGESRPEKPA). A compositionally biased stretch (low complexity) spans 514–532 (LSPALSTPSPPSLLHHPAA). Positions 548–656 (MDMQRQSHSD…NVRQLMSARP (109 aa)) constitute a PET domain. LIM zinc-binding domains lie at 655-719 (RPCD…ETLK), 720-780 (PRCS…MFAE), and 781-843 (YCDY…GEPP). Disordered regions lie at residues 840-892 (GEPP…HQAS), 933-962 (HCRS…NMSP), and 1062-1303 (ADIM…SSSS). The segment covering 861–892 (TQRVRPQTRITSSHASSSPPMSPQQQQQHQAS) has biased composition (low complexity). 2 stretches are compositionally biased toward polar residues: residues 952–962 (RASSTSHNMSP) and 1111–1120 (SLNTPLSAHS). A compositionally biased stretch (low complexity) spans 1130–1142 (SILSGASSSSPMS). Over residues 1177–1205 (GDKDRDRDRERDRDRDRDKGGDKDRESGR) the composition is skewed to basic and acidic residues. 2 stretches are compositionally biased toward basic residues: residues 1207 to 1220 (GPGH…RRKS) and 1228 to 1240 (NHHR…RSHS). Over residues 1269–1284 (ETAHKSPRQQRERERE) the composition is skewed to basic and acidic residues.

Belongs to the prickle / espinas / testin family. In terms of assembly, interacts with dsh; PET and LIM domains interact with dsh DEP domain, in wing cells. Interacts with Vang in photoreceptor cells.

It is found in the cell membrane. Functionally, acts in a planar cell polarity (PCP) complex; polarization along the apical/basal axis of epithelial cells. PCP signaling in the wing disk requires the receptor fz and the cytoplasmic proteins dsh and pk. These act in a feedback loop leading to activation of the jnk cascade and subsequent polarized arrangement of hairs and bristles. Dgo and pk compete with one another for dsh binding, thereby modulating fz dsh activity and ensuring tight control over fz PCP signaling. Vang, stan and pk function together to regulate the establishment of tissue polarity in the adult eye. The polypeptide is Protein prickle (Drosophila pseudoobscura pseudoobscura (Fruit fly)).